Here is a 289-residue protein sequence, read N- to C-terminus: tRNA dimethylallyltransferase (289 aa).

9–16 (GTTASGKT) is an ATP binding site. Position 11–16 (11–16 (TASGKT)) interacts with substrate. The tract at residues 34-37 (DSLC) is interaction with substrate tRNA.

The protein belongs to the IPP transferase family. In terms of assembly, monomer. It depends on Mg(2+) as a cofactor.

It catalyses the reaction adenosine(37) in tRNA + dimethylallyl diphosphate = N(6)-dimethylallyladenosine(37) in tRNA + diphosphate. In terms of biological role, catalyzes the transfer of a dimethylallyl group onto the adenine at position 37 in tRNAs that read codons beginning with uridine, leading to the formation of N6-(dimethylallyl)adenosine (i(6)A). In Campylobacter jejuni subsp. jejuni serotype O:23/36 (strain 81-176), this protein is tRNA dimethylallyltransferase.